The chain runs to 186 residues: dCTP deaminase, dUMP-forming (186 aa).

DCTP-binding positions include 99–104 (KSSIAR), aspartate 117, 125–127 (TLE), glutamine 146, tyrosine 159, lysine 166, and glutamine 170. The active-site Proton donor/acceptor is the glutamate 127.

Belongs to the dCTP deaminase family. As to quaternary structure, homotrimer.

The catalysed reaction is dCTP + 2 H2O = dUMP + NH4(+) + diphosphate. It participates in pyrimidine metabolism; dUMP biosynthesis; dUMP from dCTP: step 1/1. Bifunctional enzyme that catalyzes both the deamination of dCTP to dUTP and the hydrolysis of dUTP to dUMP without releasing the toxic dUTP intermediate. This chain is dCTP deaminase, dUMP-forming, found in Methanosphaerula palustris (strain ATCC BAA-1556 / DSM 19958 / E1-9c).